A 492-amino-acid polypeptide reads, in one-letter code: Glutamyl-tRNA(Gln) amidotransferase subunit A (492 aa).

Active-site charge relay system residues include Lys-78 and Ser-158. Ser-182 functions as the Acyl-ester intermediate in the catalytic mechanism.

It belongs to the amidase family. GatA subfamily. In terms of assembly, heterotrimer of A, B and C subunits.

It catalyses the reaction L-glutamyl-tRNA(Gln) + L-glutamine + ATP + H2O = L-glutaminyl-tRNA(Gln) + L-glutamate + ADP + phosphate + H(+). In terms of biological role, allows the formation of correctly charged Gln-tRNA(Gln) through the transamidation of misacylated Glu-tRNA(Gln) in organisms which lack glutaminyl-tRNA synthetase. The reaction takes place in the presence of glutamine and ATP through an activated gamma-phospho-Glu-tRNA(Gln). This Rhodopseudomonas palustris (strain BisB5) protein is Glutamyl-tRNA(Gln) amidotransferase subunit A.